The chain runs to 251 residues: 5'-nucleotidase SurE (251 aa).

Residues D8, D9, S39, and N95 each contribute to the a divalent metal cation site.

Belongs to the SurE nucleotidase family. A divalent metal cation is required as a cofactor.

It is found in the cytoplasm. The catalysed reaction is a ribonucleoside 5'-phosphate + H2O = a ribonucleoside + phosphate. In terms of biological role, nucleotidase that shows phosphatase activity on nucleoside 5'-monophosphates. In Clostridium botulinum (strain Alaska E43 / Type E3), this protein is 5'-nucleotidase SurE.